Reading from the N-terminus, the 486-residue chain is ATP synthase subunit beta, chloroplastic (486 aa).

ATP is bound at residue 154 to 161 (GGAGVGKT).

Belongs to the ATPase alpha/beta chains family. In terms of assembly, F-type ATPases have 2 components, CF(1) - the catalytic core - and CF(0) - the membrane proton channel. CF(1) has five subunits: alpha(3), beta(3), gamma(1), delta(1), epsilon(1). CF(0) has four main subunits: a(1), b(1), b'(1) and c(9-12).

The protein resides in the plastid. The protein localises to the chloroplast thylakoid membrane. The enzyme catalyses ATP + H2O + 4 H(+)(in) = ADP + phosphate + 5 H(+)(out). Functionally, produces ATP from ADP in the presence of a proton gradient across the membrane. The catalytic sites are hosted primarily by the beta subunits. In Dennstaedtia punctilobula (Hay-scented fern), this protein is ATP synthase subunit beta, chloroplastic.